The primary structure comprises 358 residues: DnaJ homolog subfamily C member 18 (358 aa).

In terms of domain architecture, J spans 82–146 (NYYEILGVSR…DKRLRYDEYG (65 aa)). Residues 228–248 (AFIQLLPVLVIVIISVITQLL) traverse the membrane as a helical segment.

It localises to the endoplasmic reticulum membrane. In Macaca fascicularis (Crab-eating macaque), this protein is DnaJ homolog subfamily C member 18 (DNAJC18).